A 227-amino-acid chain; its full sequence is uncharacterized protein (227 aa).

The protein belongs to the flavoredoxin family. It depends on FMN as a cofactor.

This is an uncharacterized protein from Deinococcus radiodurans (strain ATCC 13939 / DSM 20539 / JCM 16871 / CCUG 27074 / LMG 4051 / NBRC 15346 / NCIMB 9279 / VKM B-1422 / R1).